The following is an 875-amino-acid chain: Protein HIR2 (875 aa).

WD repeat units follow at residues isoleucine 10–phenylalanine 47, lysine 118–glutamate 158, lysine 163–leucine 201, proline 237–tyrosine 277, glutamate 278–asparagine 316, and valine 320–alanine 359. Positions glutamate 398–lysine 473 are disordered. A compositionally biased stretch (polar residues) spans alanine 424–tyrosine 446. WD repeat units lie at residues leucine 546–proline 587 and valine 589–proline 626. A Phosphoserine modification is found at serine 713.

It belongs to the WD repeat HIR1 family. Component of the HIR complex, composed of HIR1, HIR2, HIR3 and HPC2. This complex may consist of one copy of HIR1 and HIR3 and two copies of HIR2 and HPC2. The HIR complex interacts with ASF1. Interacts with SNF2. Interacts with SNF5. Interacts with SWI3. Interacts with RTT106.

Its subcellular location is the nucleus. It is found in the chromosome. Functionally, component of the HIR complex, which cooperates with ASF1 to promote replication-independent chromatin assembly. The HIR complex is also required for the periodic repression of three of the four histone gene loci during the cell cycle as well as for autogenous regulation of the HTA1-HTB1 locus by H2A and H2B. DNA-binding by the HIR complex may repress transcription by inhibiting nucleosome remodeling by the SWI/SNF complex. The HIR complex may also be required for transcriptional silencing of centromeric, telomeric and mating-type loci in the absence of CAF-1. The sequence is that of Protein HIR2 (HIR2) from Saccharomyces cerevisiae (strain ATCC 204508 / S288c) (Baker's yeast).